Consider the following 182-residue polypeptide: Ribulose bisphosphate carboxylase small subunit, chloroplastic 1 (182 aa).

The transit peptide at 1 to 42 (MASIMMNKSVVLSKECAKPLATPKVTLNKRGFATTIATKNRE) directs the protein to the chloroplast.

This sequence belongs to the RuBisCO small chain family. Heterohexadecamer of 8 large and 8 small subunits.

The protein localises to the plastid. The protein resides in the chloroplast. Its function is as follows. RuBisCO catalyzes two reactions: the carboxylation of D-ribulose 1,5-bisphosphate, the primary event in carbon dioxide fixation, as well as the oxidative fragmentation of the pentose substrate. Both reactions occur simultaneously and in competition at the same active site. Although the small subunit is not catalytic it is essential for maximal activity. The chain is Ribulose bisphosphate carboxylase small subunit, chloroplastic 1 from Acetabularia acetabulum (Mermaid's wine glass).